The chain runs to 418 residues: MGDKGTRVFKKASPNGKLTVYLGKRDFVDHIDLVEPVDGVVLVDPEYLKERRVYVTLTCAFRYGREDLDVLGLTFRKDLFVANVQSFPPAPEDKKPLTRLQERLIKKLGEHAYPFTFEIPPNLPCSVTLQPGPEDTGKACGVDYEVKAFCAENLEEKIHKRNSVRLVIRKVQYAPERPGPQPTAETTRQFLMSDKPLHLEASLDKEIYYHGEPISVNVHVTNNTNKTVKKIKISVRQYADICLFNTAQYKCPVAMEEADDTVAPSSTFCKVYTLTPFLANNREKRGLALDGKLKHEDTNLASSTLLREGANREILGIIVSYKVKVKLVVSRGGLLGDLASSDVAVELPFTLMHPKPKEEPPHREVPEHETPVDTNLIELDTNDDDIVFEDFARQRLKGMKDDKEEEEDGTGSPRLNDR.

Residues 1 to 163 (MGDKGTRVFK…LEEKIHKRNS (163 aa)) are interaction with SRC. The interval 45–86 (PEYLKERRVYVTLTCAFRYGREDLDVLGLTFRKDLFVANVQS) is interaction with CHRM2. Tyr-47 bears the Phosphotyrosine mark. Residues Lys-250, Met-255, Lys-324, and Lys-326 each contribute to the 1D-myo-inositol hexakisphosphate site. Residues 318-418 (IVSYKVKVKL…GTGSPRLNDR (101 aa)) form an interaction with TRAF6 region. The segment at 353 to 375 (HPKPKEEPPHREVPEHETPVDTN) is disordered. Basic and acidic residues predominate over residues 355–371 (KPKEEPPHREVPEHETP). A [DE]-X(1,2)-F-X-X-[FL]-X-X-X-R motif motif is present at residues 385–395 (DIVFEDFARQR). Residues 397-418 (KGMKDDKEEEEDGTGSPRLNDR) are disordered. Ser-412 is subject to Phosphoserine; by GRK5.

The protein belongs to the arrestin family. Monomer. Homodimer. Homooligomer; the self-association is mediated by InsP6-binding. Heterooligomer with ARRB2; the association is mediated by InsP6-binding. Interacts with ADRB2 (phosphorylated). Interacts with CHRM2 (phosphorylated). Interacts with LHCGR. Interacts with CYTH2 and CASR. Interacts with AP2B1 (dephosphorylated at 'Tyr-737'); phosphorylation of AP2B1 at 'Tyr-737' disrupts the interaction. Interacts (dephosphorylated at Ser-412) with CLTC. Interacts with CCR2 and GRK2. Interacts with CRR5. Interacts with PTAFR (phosphorylated on serine residues). Interacts with CLTC and MAP2K3. Interacts with CREB1. Interacts with TRAF6. Interacts with IGF1R and MDM2. Interacts with C5AR1. Interacts with PDE4D. Interacts with SRC (via the SH3 domain and the protein kinase domain); the interaction is independent of the phosphorylation state of SRC C-terminus. Interacts with TACR1. Interacts with RAF1. Interacts with CHUK, IKBKB and MAP3K14. Interacts with DVL1; the interaction is enhanced by phosphorylation of DVL1. Interacts with DVL2; the interaction is enhanced by phosphorylation of DVL2. Interacts with IGF1R. Associates with MAP kinase p38. Part of a MAPK signaling complex consisting of TACR1, ARRB1, SRC, MAPK1 (activated) and MAPK3 (activated). Part of a MAPK signaling complex consisting of F2RL1, ARRB1, RAF1, MAPK1 (activated) and MAPK3 (activated). Interacts with GPR143. Interacts with MAP2K4/MKK4. Interacts with HCK and CXCR1 (phosphorylated). Interacts with ACKR3 and ACKR4. Interacts with ARRDC1; the interaction is direct. Interacts with GPR61, GPR62 and GPR135. In terms of processing, constitutively phosphorylated at Ser-412 in the cytoplasm. At the plasma membrane, is rapidly dephosphorylated, a process that is required for clathrin binding and ADRB2 endocytosis but not for ADRB2 binding and desensitization. Once internalized, is rephosphorylated. Post-translationally, the ubiquitination status appears to regulate the formation and trafficking of beta-arrestin-GPCR complexes and signaling. Ubiquitination appears to occur GPCR-specific. Ubiquitinated by MDM2; the ubiquitination is required for rapid internalization of ADRB2. Deubiquitinated by USP33; the deubiquitination leads to a dissociation of the beta-arrestin-GPCR complex. Stimulation of a class A GPCR, such as ADRB2, induces transient ubiquitination and subsequently promotes association with USP33. As to expression, beta-arrestin 1A is found in cortex, cerebellum, striatum, pineal gland, retina and heart. Beta-arrestin 1B is found in spleen, lung, pituitary and kidney.

It localises to the cytoplasm. Its subcellular location is the nucleus. The protein localises to the cell membrane. It is found in the membrane. The protein resides in the clathrin-coated pit. It localises to the cell projection. Its subcellular location is the pseudopodium. The protein localises to the cytoplasmic vesicle. Its function is as follows. Functions in regulating agonist-mediated G-protein coupled receptor (GPCR) signaling by mediating both receptor desensitization and resensitization processes. During homologous desensitization, beta-arrestins bind to the GPRK-phosphorylated receptor and sterically preclude its coupling to the cognate G-protein; the binding appears to require additional receptor determinants exposed only in the active receptor conformation. The beta-arrestins target many receptors for internalization by acting as endocytic adapters (CLASPs, clathrin-associated sorting proteins) and recruiting the GPRCs to the adapter protein 2 complex 2 (AP-2) in clathrin-coated pits (CCPs). However, the extent of beta-arrestin involvement appears to vary significantly depending on the receptor, agonist and cell type. Internalized arrestin-receptor complexes traffic to intracellular endosomes, where they remain uncoupled from G-proteins. Two different modes of arrestin-mediated internalization occur. Class A receptors, like ADRB2, OPRM1, ENDRA, D1AR and ADRA1B dissociate from beta-arrestin at or near the plasma membrane and undergo rapid recycling. Class B receptors, like AVPR2, AGTR1, NTSR1, TRHR and TACR1 internalize as a complex with arrestin and traffic with it to endosomal vesicles, presumably as desensitized receptors, for extended periods of time. Receptor resensitization then requires that receptor-bound arrestin is removed so that the receptor can be dephosphorylated and returned to the plasma membrane. Involved in internalization of P2RY4 and UTP-stimulated internalization of P2RY2. Involved in phosphorylation-dependent internalization of OPRD1 ands subsequent recycling. Involved in the degradation of cAMP by recruiting cAMP phosphodiesterases to ligand-activated receptors. Beta-arrestins function as multivalent adapter proteins that can switch the GPCR from a G-protein signaling mode that transmits short-lived signals from the plasma membrane via small molecule second messengers and ion channels to a beta-arrestin signaling mode that transmits a distinct set of signals that are initiated as the receptor internalizes and transits the intracellular compartment. Acts as a signaling scaffold for MAPK pathways such as MAPK1/3 (ERK1/2). ERK1/2 activated by the beta-arrestin scaffold is largely excluded from the nucleus and confined to cytoplasmic locations such as endocytic vesicles, also called beta-arrestin signalosomes. Recruits c-Src/SRC to ADRB2 resulting in ERK activation. GPCRs for which the beta-arrestin-mediated signaling relies on both ARRB1 and ARRB2 (codependent regulation) include ADRB2, F2RL1 and PTH1R. For some GPCRs the beta-arrestin-mediated signaling relies on either ARRB1 or ARRB2 and is inhibited by the other respective beta-arrestin form (reciprocal regulation). Inhibits ERK1/2 signaling in AGTR1- and AVPR2-mediated activation (reciprocal regulation). Is required for SP-stimulated endocytosis of NK1R and recruits c-Src/SRC to internalized NK1R resulting in ERK1/2 activation, which is required for the antiapoptotic effects of SP. Is involved in proteinase-activated F2RL1-mediated ERK activity. Acts as a signaling scaffold for the AKT1 pathway. Is involved in alpha-thrombin-stimulated AKT1 signaling. Is involved in IGF1-stimulated AKT1 signaling leading to increased protection from apoptosis. Involved in activation of the p38 MAPK signaling pathway and in actin bundle formation. Involved in F2RL1-mediated cytoskeletal rearrangement and chemotaxis. Involved in AGTR1-mediated stress fiber formation by acting together with GNAQ to activate RHOA. Appears to function as signaling scaffold involved in regulation of MIP-1-beta-stimulated CCR5-dependent chemotaxis. Involved in attenuation of NF-kappa-B-dependent transcription in response to GPCR or cytokine stimulation by interacting with and stabilizing CHUK. May serve as nuclear messenger for GPCRs. Involved in OPRD1-stimulated transcriptional regulation by translocating to CDKN1B and FOS promoter regions and recruiting EP300 resulting in acetylation of histone H4. Involved in regulation of LEF1 transcriptional activity via interaction with DVL1 and/or DVL2 Also involved in regulation of receptors other than GPCRs. Involved in Toll-like receptor and IL-1 receptor signaling through the interaction with TRAF6 which prevents TRAF6 autoubiquitination and oligomerization required for activation of NF-kappa-B and JUN. Involved in IL8-mediated granule release in neutrophils. Binds phosphoinositides. Binds inositol hexakisphosphate (InsP6). Required for atypical chemokine receptor ACKR2-induced RAC1-LIMK1-PAK1-dependent phosphorylation of cofilin (CFL1) and for the up-regulation of ACKR2 from endosomal compartment to cell membrane, increasing its efficiency in chemokine uptake and degradation. Involved in the internalization of the atypical chemokine receptor ACKR3. Negatively regulates the NOTCH signaling pathway by mediating the ubiquitination and degradation of NOTCH1 by ITCH. Participates in the recruitment of the ubiquitin-protein ligase to the receptor. This Bos taurus (Bovine) protein is Beta-arrestin-1 (ARRB1).